The following is a 340-amino-acid chain: Ferrochelatase (340 aa).

Fe cation-binding residues include His189 and Glu292.

This sequence belongs to the ferrochelatase family.

It localises to the cytoplasm. It carries out the reaction heme b + 2 H(+) = protoporphyrin IX + Fe(2+). It participates in porphyrin-containing compound metabolism; protoheme biosynthesis; protoheme from protoporphyrin-IX: step 1/1. Functionally, catalyzes the ferrous insertion into protoporphyrin IX. This chain is Ferrochelatase, found in Pseudomonas syringae pv. syringae (strain B728a).